The following is a 513-amino-acid chain: Solute carrier family 2, facilitated glucose transporter member 10 (513 aa).

The Cytoplasmic portion of the chain corresponds to 1–6 (MGCSVL). A helical membrane pass occupies residues 7–27 (LLTITVSTLGGLVFGYELGII). Residues 28 to 46 (SGALPQLQTHFSLGCVQQE) lie on the Extracellular side of the membrane. A helical membrane pass occupies residues 47–67 (AVVSALLIGSLFASIIGGWLI). At 68 to 80 (DRHGRRTSILLSN) the chain is on the cytoplasmic side. The chain crosses the membrane as a helical span at residues 81–101 (LLILAGSVILTTGTSFFALVI). Topologically, residues 102–104 (GRA) are extracellular. The chain crosses the membrane as a helical span at residues 105–125 (VIGFAMTVSSMSCCIFVSEMV). Topologically, residues 126–130 (TPERR) are cytoplasmic. Residues 131–151 (GLMVTLYEVGITVGILIAYAV) traverse the membrane as a helical segment. Residues 152–164 (NYIFNNVPLTGWR) lie on the Extracellular side of the membrane. A helical transmembrane segment spans residues 165 to 185 (YMFGFAIIPSLIQLASIVLLP). Over 186-236 (KQAEVFVIHDDDSRQADRLTEETETSNQHQQSEKYGVSDLFKSKDNMRRRT) the chain is Cytoplasmic. The helical transmembrane segment at 237 to 257 (VIGVGLVLSQQFTGQPNVLFY) threads the bilayer. Residue 246-247 (QQ) participates in D-glucose binding. Topologically, residues 258–272 (ASTILFSVGFQSNAS) are extracellular. Asparagine 270 carries N-linked (GlcNAc...) asparagine glycosylation. Residues 273 to 293 (AILASVGFGIVKVIATLLAML) form a helical membrane-spanning segment. Topologically, residues 294 to 301 (CSDRAGRR) are cytoplasmic. The chain crosses the membrane as a helical span at residues 302–322 (SLLIGGCSMLAVGLILTGFLC). Residues 323–376 (RQSVIDTTKRCTSVGPHSNLTLSAEHDEGVGFSSQTLDVHEHLRSFSQSEDIYK) lie on the Extracellular side of the membrane. N-linked (GlcNAc...) asparagine glycosylation is present at asparagine 341. The chain crosses the membrane as a helical span at residues 377 to 397 (WIIFTCLMAVVSAFSVSFGPM). Residues 398–422 (TWVVLSEIFPKDIRGRAFSFINCFN) are Cytoplasmic-facing. Tryptophan 399 provides a ligand contact to D-glucose. The next 2 membrane-spanning stretches (helical) occupy residues 423-443 (VGAN…IGLS) and 444-464 (GVFL…YLVL). Residues 465–513 (PETKGKSLQDIDRELSQTRMIHRQELCSIFQRRRFSPGYQRVQLTSTAT) lie on the Cytoplasmic side of the membrane.

The protein belongs to the major facilitator superfamily. Sugar transporter (TC 2.A.1.1) family. Glucose transporter subfamily.

The protein resides in the endomembrane system. It localises to the cytoplasm. The protein localises to the perinuclear region. The catalysed reaction is D-glucose(out) = D-glucose(in). Facilitative glucose transporter required for the development of the cardiovascular system. The chain is Solute carrier family 2, facilitated glucose transporter member 10 from Danio rerio (Zebrafish).